Reading from the N-terminus, the 235-residue chain is Peptidyl-tRNA hydrolase (235 aa).

Y14 is a tRNA binding site. H19 functions as the Proton acceptor in the catalytic mechanism. F64, N66, and N112 together coordinate tRNA. A disordered region spans residues 186-235 (RTAPPRSSGGSPKTDKPAKATREPPPAAKPEATPEEETRSPLQRLVDKFR). The span at 198–207 (KTDKPAKATR) shows a compositional bias: basic and acidic residues.

It belongs to the PTH family. Monomer.

It is found in the cytoplasm. It carries out the reaction an N-acyl-L-alpha-aminoacyl-tRNA + H2O = an N-acyl-L-amino acid + a tRNA + H(+). Hydrolyzes ribosome-free peptidyl-tRNAs (with 1 or more amino acids incorporated), which drop off the ribosome during protein synthesis, or as a result of ribosome stalling. Functionally, catalyzes the release of premature peptidyl moieties from peptidyl-tRNA molecules trapped in stalled 50S ribosomal subunits, and thus maintains levels of free tRNAs and 50S ribosomes. This is Peptidyl-tRNA hydrolase from Dinoroseobacter shibae (strain DSM 16493 / NCIMB 14021 / DFL 12).